The sequence spans 372 residues: Tryptophan--tRNA ligase (372 aa).

The 'HIGH' region motif lies at 79 to 87 (PSGKFHFGH). The segment at 247–268 (KLQPGLDGRKMSSSRPDSTIFL) is disordered. A 'KMSKS' region motif is present at residues 256–260 (KMSSS). Over residues 257–267 (MSSSRPDSTIF) the composition is skewed to polar residues.

The protein belongs to the class-I aminoacyl-tRNA synthetase family.

Its subcellular location is the cytoplasm. It catalyses the reaction tRNA(Trp) + L-tryptophan + ATP = L-tryptophyl-tRNA(Trp) + AMP + diphosphate + H(+). The polypeptide is Tryptophan--tRNA ligase (Aeropyrum pernix (strain ATCC 700893 / DSM 11879 / JCM 9820 / NBRC 100138 / K1)).